The sequence spans 860 residues: Leucine--tRNA ligase (860 aa).

Residues 42–52 (PYPSGRLHMGH) carry the 'HIGH' region motif. The short motif at 619 to 623 (KMSKS) is the 'KMSKS' region element. Lys-622 lines the ATP pocket.

The protein belongs to the class-I aminoacyl-tRNA synthetase family.

The protein resides in the cytoplasm. The enzyme catalyses tRNA(Leu) + L-leucine + ATP = L-leucyl-tRNA(Leu) + AMP + diphosphate. This Escherichia coli O157:H7 protein is Leucine--tRNA ligase.